Here is a 388-residue protein sequence, read N- to C-terminus: S-adenosylmethionine synthase (388 aa).

Histidine 16 contacts ATP. Position 18 (aspartate 18) interacts with Mg(2+). Glutamate 44 is a binding site for K(+). L-methionine contacts are provided by glutamate 57 and glutamine 100. The tract at residues 100–110 is flexible loop; the sequence is QSPDIAQGVDK. ATP is bound by residues 167–169, 233–234, aspartate 242, 248–249, alanine 265, and lysine 269; these read DAK, RF, and RK. L-methionine is bound at residue aspartate 242. Position 273 (lysine 273) interacts with L-methionine.

It belongs to the AdoMet synthase family. In terms of assembly, homotetramer; dimer of dimers. The cofactor is Mg(2+). K(+) serves as cofactor.

It localises to the cytoplasm. The catalysed reaction is L-methionine + ATP + H2O = S-adenosyl-L-methionine + phosphate + diphosphate. Its pathway is amino-acid biosynthesis; S-adenosyl-L-methionine biosynthesis; S-adenosyl-L-methionine from L-methionine: step 1/1. Functionally, catalyzes the formation of S-adenosylmethionine (AdoMet) from methionine and ATP. The overall synthetic reaction is composed of two sequential steps, AdoMet formation and the subsequent tripolyphosphate hydrolysis which occurs prior to release of AdoMet from the enzyme. The sequence is that of S-adenosylmethionine synthase from Polynucleobacter necessarius subsp. necessarius (strain STIR1).